The following is a 270-amino-acid chain: Thiamine thiazole synthase (270 aa).

NAD(+)-binding positions include Ala39, 58–59 (EQ), Gly66, and Leu130. Cys159 is subject to 2,3-didehydroalanine (Cys). Residue Asp161 coordinates NAD(+). Asp161 and His176 together coordinate Fe cation. Ile223 is a binding site for NAD(+). Residue Arg233 participates in glycine binding.

The protein belongs to the THI4 family. As to quaternary structure, homooctamer; tetramer of dimers. Fe(2+) is required as a cofactor. In terms of processing, during the catalytic reaction, a sulfide is transferred from Cys-159 to a reaction intermediate, generating a dehydroalanine residue.

It catalyses the reaction [ADP-thiazole synthase]-L-cysteine + glycine + NAD(+) = [ADP-thiazole synthase]-dehydroalanine + ADP-5-ethyl-4-methylthiazole-2-carboxylate + nicotinamide + 3 H2O + 2 H(+). It functions in the pathway cofactor biosynthesis; thiamine diphosphate biosynthesis. In terms of biological role, involved in biosynthesis of the thiamine precursor thiazole. Catalyzes the conversion of NAD and glycine to adenosine diphosphate 5-(2-hydroxyethyl)-4-methylthiazole-2-carboxylic acid (ADT), an adenylated thiazole intermediate. The reaction includes an iron-dependent sulfide transfer from a conserved cysteine residue of the protein to a thiazole intermediate. The enzyme can only undergo a single turnover, which suggests it is a suicide enzyme. This is Thiamine thiazole synthase from Aeropyrum pernix (strain ATCC 700893 / DSM 11879 / JCM 9820 / NBRC 100138 / K1).